The sequence spans 604 residues: MSAILSADDLNDFISPGVACIKPVETLPPKDTKNQEDAYEVTTEDKVQPEDLPPAQISLTDCLACSGCVTSAEAVLISLQSHAEVLNTLDAHPEIPLTHEPHGVGVNNTEDSKEGKIFVASVSPQVRASLATTYGISEKEAGYMIDQLLSGPQGLRGGGKHGNGFTWVVDTNAMREAVLVLTADEVSDSLNSGESSAMSQSDDSLPKRPILSSACPGWICYAEKTHPFILPHLSRLKSPQALSGTFLKTVLSKSLGVHPSRIWHLAVMPCFDKKLEASREELTDMSWRQGDSSGSESQPVRDVDCVITARELLSLASSRGSSLRDLPLQPLHSSFNPPFPEKTLDSFLSLKRSRAEQSLATGTSGGYLHHVLMTFQARNPGSELVVNRGRNVDVVEYVLMSPEGQPILKAARYYGFRNIQNLVRKLKPARVSRLPGAKPAVRPAAGRRQPMSRNAVSTGSSGSDYAYVEVMACPGGCTNGGGQIRVEDARETLGPSQGESLDASMKPSPHEQRAWLARVDEAYFSMDSESESELETQSQLLSLADKEAKIHERLRSWSEYMNIPLSKLVYTTYRKVESDVGKDQTPANDTSRVVELAGKIGGGW.

The [4Fe-4S] cluster site is built by cysteine 20, cysteine 62, cysteine 65, cysteine 68, cysteine 215, and cysteine 270. The segment at 434-461 is disordered; that stretch reads LPGAKPAVRPAAGRRQPMSRNAVSTGSS. A compositionally biased stretch (polar residues) spans 451-461; the sequence is MSRNAVSTGSS. Residues cysteine 473 and cysteine 477 each contribute to the [4Fe-4S] cluster site.

It belongs to the NARF family.

Functionally, component of the cytosolic Fe/S protein assembly machinery. Required for maturation of extramitochondrial Fe/S proteins. May play a role in the transfer of pre-assembled Fe/S clusters to target apoproteins. In Penicillium rubens (strain ATCC 28089 / DSM 1075 / NRRL 1951 / Wisconsin 54-1255) (Penicillium chrysogenum), this protein is Cytosolic Fe-S cluster assembly factor nar1 (nar1).